The sequence spans 450 residues: Glucose-6-phosphate isomerase (450 aa).

A Phosphothreonine modification is found at threonine 39. Residue glutamate 291 is the Proton donor of the active site. Residues histidine 312 and lysine 426 contribute to the active site.

Belongs to the GPI family.

The protein localises to the cytoplasm. It carries out the reaction alpha-D-glucose 6-phosphate = beta-D-fructose 6-phosphate. Its pathway is carbohydrate biosynthesis; gluconeogenesis. The protein operates within carbohydrate degradation; glycolysis; D-glyceraldehyde 3-phosphate and glycerone phosphate from D-glucose: step 2/4. Functionally, catalyzes the reversible isomerization of glucose-6-phosphate to fructose-6-phosphate. This is Glucose-6-phosphate isomerase from Bacillus anthracis.